Consider the following 122-residue polypeptide: Urease subunit beta (122 aa).

It belongs to the urease beta subunit family. In terms of assembly, heterotrimer of UreA (gamma), UreB (beta) and UreC (alpha) subunits. Three heterotrimers associate to form the active enzyme.

The protein localises to the cytoplasm. The enzyme catalyses urea + 2 H2O + H(+) = hydrogencarbonate + 2 NH4(+). It participates in nitrogen metabolism; urea degradation; CO(2) and NH(3) from urea (urease route): step 1/1. In Flavobacterium johnsoniae (strain ATCC 17061 / DSM 2064 / JCM 8514 / BCRC 14874 / CCUG 350202 / NBRC 14942 / NCIMB 11054 / UW101) (Cytophaga johnsonae), this protein is Urease subunit beta.